The following is a 247-amino-acid chain: Aliphatic sulfonates import ATP-binding protein SsuB 3 (247 aa).

An ABC transporter domain is found at 13–227 (VRVRGAGRAF…SVVDPEFSAL (215 aa)). Position 45-52 (45-52 (GASGSGKS)) interacts with ATP.

The protein belongs to the ABC transporter superfamily. Aliphatic sulfonates importer (TC 3.A.1.17.2) family. The complex is composed of two ATP-binding proteins (SsuB), two transmembrane proteins (SsuC) and a solute-binding protein (SsuA).

It localises to the cell membrane. The catalysed reaction is ATP + H2O + aliphatic sulfonate-[sulfonate-binding protein]Side 1 = ADP + phosphate + aliphatic sulfonateSide 2 + [sulfonate-binding protein]Side 1.. Functionally, part of the ABC transporter complex SsuABC involved in aliphatic sulfonates import. Responsible for energy coupling to the transport system. The sequence is that of Aliphatic sulfonates import ATP-binding protein SsuB 3 from Nocardia farcinica (strain IFM 10152).